Here is a 599-residue protein sequence, read N- to C-terminus: Subtilisin-like protease 1 (599 aa).

An N-terminal signal peptide occupies residues 1 to 20; that stretch reads MRTVFIYACIISLVLRTIPA. The propeptide at 21–195 is inhibition peptide; it reads HNDLMSKEKE…VESDELVGAD (175 aa). N-linked (GlcNAc...) asparagine glycosylation occurs at N57. Residues 74–101 are a coiled coil; that stretch reads EDAPKEELNKIEMEKKKAEEEAKNSKKK. Positions 123, 126, 128, and 183 each coordinate Ca(2+). N227 carries N-linked (GlcNAc...) asparagine glycosylation. D251 provides a ligand contact to Ca(2+). A Peptidase S8 domain is found at 257–574; sequence QWGLDLARLD…GGYIDILNAV (318 aa). 2 disulfide bridges follow: C283–C393 and C372–C389. D286 (charge relay system) is an active-site residue. The Ca(2+) site is built by D295, E306, D314, D315, D316, N318, I320, D322, and D323. N331 is a glycosylation site (N-linked (GlcNAc...) asparagine). The active-site Charge relay system is H342. Residue I353 participates in Ca(2+) binding. N355 carries N-linked (GlcNAc...) asparagine glycosylation. Positions 356, 358, and 360 each coordinate Ca(2+). Residues N402 and N434 are each glycosylated (N-linked (GlcNAc...) asparagine). A disulfide bond links C435 and C448. The Charge relay system role is filled by S519.

Belongs to the peptidase S8 family. In terms of processing, the N-terminal prodomain is cleaved.

It localises to the secreted. The protein resides in the parasitophorous vacuole lumen. It is found in the cytoplasmic vesicle. The protein localises to the secretory vesicle. It catalyses the reaction Hydrolysis of proteins with broad specificity for peptide bonds, and a preference for a large uncharged residue in P1. Hydrolyzes peptide amides.. Its function is as follows. Mediates the proteolytic maturation of serine protease SERA3. Mediates the proteolytic maturation of MSP1, and thereby may prime the parasite cell surface for invasion of fresh erythrocytes. Required for completion of the parasite pre-erythrocytic stages. Required for hepatic schizont development and merozoite formation. Required for the egress of the hepatic merozoites from the parasitophorous vacuole. Required for parasite infectivity during blood stages. Required for male gamete egress. The chain is Subtilisin-like protease 1 from Plasmodium berghei (strain Anka).